The sequence spans 518 residues: MVGAKAGPSPGTSLGLAQQHSGGSSVLVKSPFCQVCCCGPAPCASCCHSRWPSLTASTCSRLFYILLHVGASAICCLLLSRTVVERVWGKTHRIQMPSGLCAHLFGLSDCPVLSGSGAVYRVCAGTATFHLLQAVLLVHLHSPTSPRAQLHNSFWLLKLLFLLGLCAIAFCIPDEHLFPAWHYIGICGGFAFILLQLVLITAFAHSWNKNWQTGAAQDCSWFLAVLLATLGFYSMAGVGAVLLFHYYTHPAGCLLNKMLLSLHLCFCGLISFLSIAPCIRLKQPRSGLLQASVISCYIMYLTFSALSSRPPERVILQGQNHTLCLPGLSKMEPQTPDISLAMLSASIMYACVLFACNEASYLAEVFGPLWIVKVYSYEFQKPSLCFCCPETVEADKGQRGGAARPADQETPPAPPVQVQHLSYNYSAFHFVFFLASLYVMVTLTNWFSYEGAELEKTFIKGSWATFWVKVASCWACVLLYLGLLLAPLCWPPTQKPQPLILRRRRHRIISPDNKYPPV.

10 helical membrane-spanning segments follow: residues 59-79 (CSRLFYILLHVGASAICCLLL), 122-142 (VCAGTATFHLLQAVLLVHLHS), 153-173 (SFWLLKLLFLLGLCAIAFCIP), 184-204 (IGICGGFAFILLQLVLITAFA), 222-242 (FLAVLLATLGFYSMAGVGAVL), 259-279 (LLSLHLCFCGLISFLSIAPCI), 286-306 (SGLLQASVISCYIMYLTFSAL), 338-357 (ISLAMLSASIMYACVLFACN), 427-447 (AFHFVFFLASLYVMVTLTNWF), and 470-490 (VASCWACVLLYLGLLLAPLCW).

This sequence belongs to the TDE1 family.

It is found in the membrane. Functionally, incorporates a polar amino acid serine into membranes and facilitates the synthesis of two serine-derived lipids, phosphatidylserine and sphingolipids. The protein is Serine incorporator 4 (SERINC4) of Homo sapiens (Human).